The sequence spans 859 residues: DNA mismatch repair protein MutS (859 aa).

622 to 629 serves as a coordination point for ATP; sequence GPNMGGKS.

It belongs to the DNA mismatch repair MutS family.

Functionally, this protein is involved in the repair of mismatches in DNA. It is possible that it carries out the mismatch recognition step. This protein has a weak ATPase activity. This is DNA mismatch repair protein MutS from Coxiella burnetii (strain RSA 493 / Nine Mile phase I).